Here is a 480-residue protein sequence, read N- to C-terminus: Glycogen synthase (480 aa).

Residue Lys15 participates in ADP-alpha-D-glucose binding.

Belongs to the glycosyltransferase 1 family. Bacterial/plant glycogen synthase subfamily.

It catalyses the reaction [(1-&gt;4)-alpha-D-glucosyl](n) + ADP-alpha-D-glucose = [(1-&gt;4)-alpha-D-glucosyl](n+1) + ADP + H(+). It functions in the pathway glycan biosynthesis; glycogen biosynthesis. Its function is as follows. Synthesizes alpha-1,4-glucan chains using ADP-glucose. This chain is Glycogen synthase, found in Rhizobium leguminosarum bv. trifolii (strain WSM2304).